Consider the following 84-residue polypeptide: Large ribosomal subunit protein bL27 (84 aa).

It belongs to the bacterial ribosomal protein bL27 family.

This is Large ribosomal subunit protein bL27 from Buchnera aphidicola subsp. Schizaphis graminum (strain Sg).